Here is a 193-residue protein sequence, read N- to C-terminus: Large ribosomal subunit protein bL9 (193 aa).

Positions Ala-155–Ala-193 are disordered. The segment covering Asn-184–Ala-193 has biased composition (polar residues).

The protein belongs to the bacterial ribosomal protein bL9 family.

Binds to the 23S rRNA. This Bartonella quintana (strain Toulouse) (Rochalimaea quintana) protein is Large ribosomal subunit protein bL9.